The sequence spans 633 residues: MGQASSHAAGAEGSATKPLSMLVAAVGVVYGDIGTSPLYTLKEVFSGAYGVPVNHDGVLGILSLIFWSLIWVVSIKYMMFVLRADNQGEGGIMALTALARRAAAGRKRLRTLLVVCGLIGAALFYGDSMITPAISVLSAIEGLGLAFDGIDHWVVPLSLVVLVGLFLIQKHGTARIGILFGPIMVTWFLVLGALGVYGISHYPEVLHAMNPVWAVRFFMVHTGMGVAILGAVVLALTGAEALYADMGHFGRKPIARAWFLLVLPALVLNYFGQGALLLENPDAARNPFYLLAPSWALIPLVGLSTLATVIASQAVISGAFSLTRQAIQLGYIPRMYIQHTSSDEQGQIYIGAVNWSLMVGVVLLVIGFESSGALASAYGVAVTGTMLMTTILVSAVMLLLWKWPPILAVPVLIGFLLVDGLYFAANVPKIVQGGAFPVIAGIALFVLMTTWKRGKQLLVERLDEGALPLPIFISSIRVQPPHRVQGTAVFLTARSDAVPHALLHNLLHNQVLHEQVVLLTVVYEDIPRVPPSRRFEVEAHGEGFFRVILHFGFTDEPDVPQALKLCHLDDLDFSPMRTTYFLSRETVIASKLEGMARWREALFAFMLKNANGNLRFFNLPLNRVIELGTQVEM.

The next 12 helical transmembrane spans lie at 21 to 41 (MLVAAVGVVYGDIGTSPLYTL), 61 to 81 (ILSLIFWSLIWVVSIKYMMFV), 112 to 132 (LLVVCGLIGAALFYGDSMITP), 149 to 169 (GIDHWVVPLSLVVLVGLFLIQ), 176 to 196 (IGILFGPIMVTWFLVLGALGV), 217 to 237 (FFMVHTGMGVAILGAVVLALT), 258 to 278 (WFLLVLPALVLNYFGQGALLL), 290 to 310 (LLAPSWALIPLVGLSTLATVI), 348 to 368 (IYIGAVNWSLMVGVVLLVIGF), 377 to 397 (AYGVAVTGTMLMTTILVSAVM), 398 to 418 (LLLWKWPPILAVPVLIGFLLV), and 430 to 450 (IVQGGAFPVIAGIALFVLMTT).

This sequence belongs to the HAK/KUP transporter (TC 2.A.72) family.

It localises to the cell inner membrane. It carries out the reaction K(+)(in) + H(+)(in) = K(+)(out) + H(+)(out). Transport of potassium into the cell. Likely operates as a K(+):H(+) symporter. The chain is Probable potassium transport system protein Kup from Pseudomonas fluorescens (strain Pf0-1).